The primary structure comprises 75 residues: Acyl carrier protein (75 aa).

Residues 1-75 (MSVFDKVKSI…DAVNYIKENQ (75 aa)) form the Carrier domain. Serine 35 carries the post-translational modification O-(pantetheine 4'-phosphoryl)serine.

This sequence belongs to the acyl carrier protein (ACP) family. 4'-phosphopantetheine is transferred from CoA to a specific serine of apo-ACP by AcpS. This modification is essential for activity because fatty acids are bound in thioester linkage to the sulfhydryl of the prosthetic group.

It localises to the cytoplasm. Its pathway is lipid metabolism; fatty acid biosynthesis. Its function is as follows. Carrier of the growing fatty acid chain in fatty acid biosynthesis. This chain is Acyl carrier protein, found in Desulfitobacterium hafniense (strain Y51).